The primary structure comprises 250 residues: MMDTDHTEIIKEGEAVVEAMALLQSRFRRICVFCGSSQGKKKSYQDAAVELGKELVARNIDLVYGGGSVGLMGLVSQAVYNGGRHVIGVIPKTLMPREITGETVGEVKAVADMHQRKAEMARQSDAFIALPGGYGTLEELLEVIAWAQLGIHDKPVGLLNVDGYYNSLLSFIDKAVEEEFISPSARHIIVLAPTPKELLEKLEAYSPRHDKVVPKMQWEMEKMSYCKSCEIPGLKEGNKATIQAQRGSML.

Residues Glu98, 116 to 117 (RK), and 133 to 139 (GYGTLEE) each bind substrate.

This sequence belongs to the LOG family. As to expression, expressed in roots, leaves, stems, tiller buds, shoot apex, immature inflorescences and flowers.

The enzyme catalyses N(6)-(dimethylallyl)adenosine 5'-phosphate + H2O = N(6)-dimethylallyladenine + D-ribose 5-phosphate. The catalysed reaction is 9-ribosyl-trans-zeatin 5'-phosphate + H2O = trans-zeatin + D-ribose 5-phosphate. Functionally, cytokinin-activating enzyme working in the direct activation pathway. Phosphoribohydrolase that converts inactive cytokinin nucleotides to the biologically active free-base forms. This Oryza sativa subsp. japonica (Rice) protein is Probable cytokinin riboside 5'-monophosphate phosphoribohydrolase LOGL6 (LOGL6).